The chain runs to 296 residues: 4-hydroxy-tetrahydrodipicolinate synthase (296 aa).

Thr-46 is a binding site for pyruvate. Catalysis depends on Tyr-134, which acts as the Proton donor/acceptor. The active-site Schiff-base intermediate with substrate is Lys-162. Ile-204 is a binding site for pyruvate.

Belongs to the DapA family. In terms of assembly, homotetramer; dimer of dimers.

It is found in the cytoplasm. The catalysed reaction is L-aspartate 4-semialdehyde + pyruvate = (2S,4S)-4-hydroxy-2,3,4,5-tetrahydrodipicolinate + H2O + H(+). The protein operates within amino-acid biosynthesis; L-lysine biosynthesis via DAP pathway; (S)-tetrahydrodipicolinate from L-aspartate: step 3/4. Its function is as follows. Catalyzes the condensation of (S)-aspartate-beta-semialdehyde [(S)-ASA] and pyruvate to 4-hydroxy-tetrahydrodipicolinate (HTPA). The polypeptide is 4-hydroxy-tetrahydrodipicolinate synthase (Clostridium novyi (strain NT)).